The following is a 274-amino-acid chain: Thiamine kinase (274 aa).

Belongs to the thiamine kinase family.

The enzyme catalyses thiamine + ATP = thiamine phosphate + ADP + H(+). It functions in the pathway cofactor biosynthesis; thiamine diphosphate biosynthesis; thiamine phosphate from thiamine: step 1/1. Catalyzes the ATP-dependent phosphorylation of thiamine to thiamine phosphate. Is involved in thiamine salvage. The sequence is that of Thiamine kinase from Salmonella choleraesuis (strain SC-B67).